A 195-amino-acid polypeptide reads, in one-letter code: Toxin protein Tse4 (195 aa).

The next 4 membrane-spanning stretches (helical) occupy residues 20-40, 116-136, 140-160, and 171-191; these read ASGGGMTVAFLAGSGGSITLL, YVELGAGVIAGGSGTAILFGL, LLAAVALASASPLTAALGASM, and ALLMAGVNVGAQFGGGAAAYL.

The protein resides in the host membrane. It localises to the secreted. Its function is as follows. Toxin secreted by the H1 type VI (H1-T6SS) secretion system into the periplasm of recipient cells. The protein is Toxin protein Tse4 of Pseudomonas aeruginosa (strain ATCC 15692 / DSM 22644 / CIP 104116 / JCM 14847 / LMG 12228 / 1C / PRS 101 / PAO1).